Reading from the N-terminus, the 411-residue chain is Phosphoribosylaminoimidazole-succinocarboxamide synthase, chloroplastic (411 aa).

A chloroplast-targeting transit peptide spans 1 to 53 (MAQCVRSTLNPVRTPQSFTRKAYVKSPAFASVSFLRAVPEFNKYPKPCSLVMS).

The protein belongs to the SAICAR synthetase family.

It is found in the plastid. The protein localises to the chloroplast. It carries out the reaction 5-amino-1-(5-phospho-D-ribosyl)imidazole-4-carboxylate + L-aspartate + ATP = (2S)-2-[5-amino-1-(5-phospho-beta-D-ribosyl)imidazole-4-carboxamido]succinate + ADP + phosphate + 2 H(+). It participates in purine metabolism; IMP biosynthesis via de novo pathway; 5-amino-1-(5-phospho-D-ribosyl)imidazole-4-carboxamide from 5-amino-1-(5-phospho-D-ribosyl)imidazole-4-carboxylate: step 1/2. This chain is Phosphoribosylaminoimidazole-succinocarboxamide synthase, chloroplastic (PUR7), found in Arabidopsis thaliana (Mouse-ear cress).